The primary structure comprises 354 residues: Glycerol-3-phosphate dehydrogenase [NAD(+)], glycosomal (354 aa).

NAD(+) is bound by residues 15–20 (GSGAFG), F90, K118, and A150. K118 serves as a coordination point for substrate. The active-site Proton acceptor is K203. NAD(+) is bound by residues R267 and E293. Residue 267–268 (RN) coordinates substrate. The Microbody targeting signal signature appears at 352-354 (SKM).

The protein belongs to the NAD-dependent glycerol-3-phosphate dehydrogenase family.

The protein resides in the glycosome. It catalyses the reaction sn-glycerol 3-phosphate + NAD(+) = dihydroxyacetone phosphate + NADH + H(+). The protein is Glycerol-3-phosphate dehydrogenase [NAD(+)], glycosomal (GPD) of Trypanosoma brucei brucei.